Reading from the N-terminus, the 333-residue chain is Uroporphyrinogen decarboxylase (333 aa).

Residues 21–25 (RQVGR), D70, Y139, S194, and H309 contribute to the substrate site.

The protein belongs to the uroporphyrinogen decarboxylase family. As to quaternary structure, homodimer.

It is found in the cytoplasm. The enzyme catalyses uroporphyrinogen III + 4 H(+) = coproporphyrinogen III + 4 CO2. It participates in porphyrin-containing compound metabolism; protoporphyrin-IX biosynthesis; coproporphyrinogen-III from 5-aminolevulinate: step 4/4. In terms of biological role, catalyzes the decarboxylation of four acetate groups of uroporphyrinogen-III to yield coproporphyrinogen-III. In Chlamydia abortus (strain DSM 27085 / S26/3) (Chlamydophila abortus), this protein is Uroporphyrinogen decarboxylase.